We begin with the raw amino-acid sequence, 144 residues long: Ribonuclease H (144 aa).

Positions 1 to 141 (MKKVEIFTDG…ADRLASEAAD (141 aa)) constitute an RNase H type-1 domain. Mg(2+) contacts are provided by Asp9, Glu47, Asp69, and Asp133.

Belongs to the RNase H family. In terms of assembly, monomer. Mg(2+) is required as a cofactor.

Its subcellular location is the cytoplasm. The catalysed reaction is Endonucleolytic cleavage to 5'-phosphomonoester.. Its function is as follows. Endonuclease that specifically degrades the RNA of RNA-DNA hybrids. This is Ribonuclease H from Erythrobacter litoralis (strain HTCC2594).